The chain runs to 1111 residues: Cell death abnormality protein 1 (1111 aa).

The N-terminal stretch at 1–18 (MRLILLVLLATWQVVVDT) is a signal peptide. Over 19–910 (RAPTFPDKLT…NGAGRSTGLT (892 aa)) the chain is Extracellular. The 73-residue stretch at 41 to 113 (GDHVCTVKTI…QCCDGYYQTK (73 aa)) folds into the EMI domain. 15 disulfide bridges follow: Cys45–Cys106, Cys71–Cys80, Cys105–Cys117, Cys121–Cys130, Cys125–Cys136, Cys138–Cys147, Cys160–Cys172, Cys166–Cys179, Cys181–Cys190, Cys203–Cys215, Cys209–Cys221, Cys223–Cys232, Cys245–Cys257, Cys251–Cys264, and Cys266–Cys275. N-linked (GlcNAc...) asparagine glycosylation is present at Asn66. EGF-like domains are found at residues 118–148 (LPDCNPPCKKGKCIEPGKCECDPGYGGKYCA), 156–191 (WGLGCSKSCDCENGANCDPELGTCICTSGFQGERCE), 199–233 (WGPNCVKSCPCQNGGKCNKEGKCVCSDGWGGEFCL), and 241–276 (FGAECKFECNCQNGATCDNTNGKCICKSGYHGALCE). Residues Asn333 and Asn345 are each glycosylated (N-linked (GlcNAc...) asparagine). Residues 421-458 (YGPNCEKQAMCDWNHASECNPETGSCVCKPGRTGKNCS) form the EGF-like 5 domain. Intrachain disulfides connect Cys425–Cys439, Cys431–Cys446, and Cys448–Cys457. N-linked (GlcNAc...) asparagine glycosylation is present at Asn456. The stretch at 629–680 (DQKCDPNTFGFLCQETVTPSPCASTDPKNGVCLSCPPGSSGIHCEHNCPAGS) is one FU repeat. Residues 681-716 (YGDGCQQVCSCADGHGCDPTTGECICEPGYHGKTCS) form the EGF-like 6 domain. 3 disulfides stabilise this stretch: Cys685/Cys697, Cys691/Cys704, and Cys706/Cys715. The chain crosses the membrane as a helical span at residues 911–931 (WFFVLLIVALCGGLGLIALFY). The interaction with trim-21 stretch occupies residues 931–1007 (YRNKYQKEKD…EEELENKKIH (77 aa)). The Cytoplasmic portion of the chain corresponds to 932–1111 (RNKYQKEKDP…KKRAQDNLYT (180 aa)). 2 disordered regions span residues 940–993 (DPDM…PNGL) and 1006–1111 (IHGR…NLYT). Positions 962-965 (NPLY) match the NPXY motif. A compositionally biased stretch (polar residues) spans 963 to 980 (PLYSRQSVFPDSDAFSSE). Position 1019 is a phosphotyrosine; by SRC (Tyr1019). Positions 1019–1022 (YASL) match the YXXL motif. Residues 1030 to 1039 (SSSSASASAS) are compositionally biased toward low complexity. Residues 1068–1083 (NSISPAHAVTTSNHNE) show a composition bias toward polar residues.

In terms of assembly, interacts (via C-terminus) with ced-6 (via PTB domain). Interacts with nck-1; the interaction is required for ced-1 degradation through the proteasome pathway. Interacts with V-ATPase vha-10. Phosphorylation of Tyr-1019, within the YXXL motif, by src-1 is thought to initiate phagosomal formation. In terms of processing, 'Lys-48'-linked polyubiquitination by trim-21 leads to proteasomal degradation. As to expression, expressed in engulfing cells and syncytium hypodermal cells. Ced-7 is necessary for clustering around cell corpses prior to engulfment.

It is found in the cell membrane. The protein localises to the cytoplasmic vesicle. The protein resides in the phagosome membrane. Its function is as follows. Involved in programmed cell death, also called apoptosis, in both somatic and germ cells. Acts by recruiting ced-6 to phagosomes which enables actin-dependent cytoskeletal reorganization and subsequent engulfment of the apoptotic cell corpse. Has a role in the association of ppk-3 and rab-7 with the phagosomal surface which is necessary for the incorporation of lysosomes to phagosomes during phagosome maturation. Activates the expression of unfolded protein response genes, which are involved in the immune response to live bacteria. This chain is Cell death abnormality protein 1, found in Caenorhabditis elegans.